Here is an 89-residue protein sequence, read N- to C-terminus: Large ribosomal subunit protein bL27 (89 aa).

Positions Met-1–Val-23 are disordered.

Belongs to the bacterial ribosomal protein bL27 family.

The sequence is that of Large ribosomal subunit protein bL27 from Mesorhizobium japonicum (strain LMG 29417 / CECT 9101 / MAFF 303099) (Mesorhizobium loti (strain MAFF 303099)).